The sequence spans 428 residues: Maltoporin (428 aa).

The N-terminal stretch at 1–24 (MKSMRILPISLTIMAGLLSIEASA) is a signal peptide.

Belongs to the porin LamB (TC 1.B.3) family. Homotrimer formed of three 18-stranded antiparallel beta-barrels, containing three independent channels.

The protein resides in the cell outer membrane. The enzyme catalyses beta-maltose(in) = beta-maltose(out). Involved in the transport of maltose and maltodextrins. This is Maltoporin from Photorhabdus laumondii subsp. laumondii (strain DSM 15139 / CIP 105565 / TT01) (Photorhabdus luminescens subsp. laumondii).